The sequence spans 156 residues: Small ribosomal subunit protein uS7 (156 aa).

It belongs to the universal ribosomal protein uS7 family. In terms of assembly, part of the 30S ribosomal subunit. Contacts proteins S9 and S11.

In terms of biological role, one of the primary rRNA binding proteins, it binds directly to 16S rRNA where it nucleates assembly of the head domain of the 30S subunit. Is located at the subunit interface close to the decoding center, probably blocks exit of the E-site tRNA. In Arthrobacter sp. (strain FB24), this protein is Small ribosomal subunit protein uS7.